A 453-amino-acid polypeptide reads, in one-letter code: Jacalin-related lectin 40 (453 aa).

Jacalin-type lectin domains follow at residues M1–T142, H154–S296, and P306–P449. An N-acetylalanine modification is found at A2.

The protein belongs to the jacalin lectin family. Expressed in roots.

This Arabidopsis thaliana (Mouse-ear cress) protein is Jacalin-related lectin 40 (JAL40).